The chain runs to 411 residues: Phosphoglycerate kinase (411 aa).

Substrate-binding positions include 19 to 21 (DLN), arginine 34, 57 to 60 (HQSR), arginine 114, and arginine 154. Residues glutamate 332 and 358–361 (GGHS) contribute to the ATP site.

Belongs to the phosphoglycerate kinase family. As to quaternary structure, monomer.

Its subcellular location is the cytoplasm. It catalyses the reaction (2R)-3-phosphoglycerate + ATP = (2R)-3-phospho-glyceroyl phosphate + ADP. It functions in the pathway carbohydrate degradation; glycolysis; pyruvate from D-glyceraldehyde 3-phosphate: step 2/5. This Thermococcus kodakarensis (strain ATCC BAA-918 / JCM 12380 / KOD1) (Pyrococcus kodakaraensis (strain KOD1)) protein is Phosphoglycerate kinase.